Reading from the N-terminus, the 201-residue chain is Alpha-1-acid glycoprotein 2 (201 aa).

The signal sequence occupies residues 1 to 18 (MALSWVLTVLSLLPLLEA). At Gln19 the chain carries Pyrrolidone carboxylic acid. Cystine bridges form between Cys23–Cys165 and Cys90–Cys183. Asn33 carries an N-linked (GlcNAc...) (complex) asparagine glycan. Asn56, Asn72, Asn93, and Asn103 each carry an N-linked (GlcNAc...) asparagine glycan.

This sequence belongs to the calycin superfamily. Lipocalin family. In terms of processing, N-glycosylated. N-glycan heterogeneity at Asn-33: Hex5HexNAc4 (minor), Hex6HexNAc5 (major) and dHex1Hex6HexNAc5 (minor). Expressed by the liver and secreted in plasma.

The protein localises to the secreted. In terms of biological role, functions as a transport protein in the blood stream. Binds various hydrophobic ligands in the interior of its beta-barrel domain. Also binds synthetic drugs and influences their distribution and availability. Appears to function in modulating the activity of the immune system during the acute-phase reaction. This Homo sapiens (Human) protein is Alpha-1-acid glycoprotein 2 (ORM2).